The chain runs to 165 residues: Transcriptional repressor NrdR (165 aa).

A zinc finger lies at 3 to 34 (CPFCRNPDSRVVDSRMADDGSAIRRRRQCPEC). One can recognise an ATP-cone domain in the interval 46–136 (LTVIKRSGVG…VYQAFESLED (91 aa)).

This sequence belongs to the NrdR family. The cofactor is Zn(2+).

Its function is as follows. Negatively regulates transcription of bacterial ribonucleotide reductase nrd genes and operons by binding to NrdR-boxes. The protein is Transcriptional repressor NrdR of Arthrobacter sp. (strain FB24).